We begin with the raw amino-acid sequence, 296 residues long: MTNLNKKVRVGIIGSGNIGTDLLIKTMRSESLTCTIFAGRNFNSAGMKRANELGVHISDRGIQAILDDPSICDVVFDATSAQAHIEHWRELEPLDKTVIDMTPAKVGGFCIPAINAEEILASGNRNINMVTCGGQSSIPIANAISSVHPEFEYIEVASSIASRSAGPATRANLDEYIDTTEKALKQFTGAQRTKAILILNPAVPPIDMQTTIYAKIDRPNIAAIDAAVREMVERLKRYVPGYQLVLPPTLDGNRVVTTVKVMGNGDYLPQYAGNLDIINCAAIAVTEMISSLRYGK.

15–18 (SGNI) is an NAD(+) binding site. The active-site Acyl-thioester intermediate is the C132. NAD(+)-binding positions include 164–172 (SAGPATRAN) and N274.

The protein belongs to the acetaldehyde dehydrogenase family. Interacts with MhpE.

It carries out the reaction acetaldehyde + NAD(+) + CoA = acetyl-CoA + NADH + H(+). The protein operates within aromatic compound metabolism; 3-phenylpropanoate degradation. Functionally, catalyzes the conversion of acetaldehyde to acetyl-CoA, using NAD(+) and coenzyme A. Is the final enzyme in the meta-cleavage pathway for the degradation of aromatic compounds. In Pectobacterium atrosepticum (strain SCRI 1043 / ATCC BAA-672) (Erwinia carotovora subsp. atroseptica), this protein is Acetaldehyde dehydrogenase.